The primary structure comprises 520 residues: GMP synthase [glutamine-hydrolyzing] (520 aa).

The region spanning 8–202 is the Glutamine amidotransferase type-1 domain; sequence RLLIIDFGSQ…FVRLAGFSGD (195 aa). The active-site Nucleophile is the C86. Catalysis depends on residues H177 and E179. A GMPS ATP-PPase domain is found at 203-395; sequence WTMGAYREQM…LGLPDSFIGR (193 aa). 230-236 is a binding site for ATP; the sequence is SGGVDSS.

In terms of assembly, homodimer.

The enzyme catalyses XMP + L-glutamine + ATP + H2O = GMP + L-glutamate + AMP + diphosphate + 2 H(+). It functions in the pathway purine metabolism; GMP biosynthesis; GMP from XMP (L-Gln route): step 1/1. Catalyzes the synthesis of GMP from XMP. The polypeptide is GMP synthase [glutamine-hydrolyzing] (Ruegeria sp. (strain TM1040) (Silicibacter sp.)).